The chain runs to 361 residues: Tyrosine--tRNA ligase (361 aa).

L-tyrosine contacts are provided by tyrosine 36, tyrosine 162, glutamine 166, aspartate 169, and glutamine 184. Positions 236 to 240 match the 'KMSKS' region motif; that stretch reads KMSKS. Lysine 239 is an ATP binding site.

The protein belongs to the class-I aminoacyl-tRNA synthetase family. TyrS type 4 subfamily. As to quaternary structure, homodimer.

The protein localises to the cytoplasm. It catalyses the reaction tRNA(Tyr) + L-tyrosine + ATP = L-tyrosyl-tRNA(Tyr) + AMP + diphosphate + H(+). Functionally, catalyzes the attachment of tyrosine to tRNA(Tyr) in a two-step reaction: tyrosine is first activated by ATP to form Tyr-AMP and then transferred to the acceptor end of tRNA(Tyr). The polypeptide is Tyrosine--tRNA ligase (Saccharolobus islandicus (strain L.S.2.15 / Lassen #1) (Sulfolobus islandicus)).